The primary structure comprises 616 residues: Proline--tRNA ligase (616 aa).

This sequence belongs to the class-II aminoacyl-tRNA synthetase family. ProS type 1 subfamily. In terms of assembly, homodimer.

The protein resides in the cytoplasm. The catalysed reaction is tRNA(Pro) + L-proline + ATP = L-prolyl-tRNA(Pro) + AMP + diphosphate. Catalyzes the attachment of proline to tRNA(Pro) in a two-step reaction: proline is first activated by ATP to form Pro-AMP and then transferred to the acceptor end of tRNA(Pro). As ProRS can inadvertently accommodate and process non-cognate amino acids such as alanine and cysteine, to avoid such errors it has two additional distinct editing activities against alanine. One activity is designated as 'pretransfer' editing and involves the tRNA(Pro)-independent hydrolysis of activated Ala-AMP. The other activity is designated 'posttransfer' editing and involves deacylation of mischarged Ala-tRNA(Pro). The misacylated Cys-tRNA(Pro) is not edited by ProRS. This Streptococcus mutans serotype c (strain ATCC 700610 / UA159) protein is Proline--tRNA ligase.